A 587-amino-acid chain; its full sequence is Aspartate--tRNA ligase (587 aa).

Glu-174 is a binding site for L-aspartate. The interval 198–201 (QTFK) is aspartate. Residue Arg-220 coordinates L-aspartate. Residues 220–222 (RDE) and Gln-229 contribute to the ATP site. His-447 contacts L-aspartate. ATP is bound at residue Glu-481. Arg-488 is a binding site for L-aspartate. 533-536 (GLDR) serves as a coordination point for ATP.

This sequence belongs to the class-II aminoacyl-tRNA synthetase family. Type 1 subfamily. Homodimer.

It is found in the cytoplasm. The enzyme catalyses tRNA(Asp) + L-aspartate + ATP = L-aspartyl-tRNA(Asp) + AMP + diphosphate. Functionally, catalyzes the attachment of L-aspartate to tRNA(Asp) in a two-step reaction: L-aspartate is first activated by ATP to form Asp-AMP and then transferred to the acceptor end of tRNA(Asp). This chain is Aspartate--tRNA ligase, found in Porphyromonas gingivalis (strain ATCC BAA-308 / W83).